Here is a 351-residue protein sequence, read N- to C-terminus: Protein FAM118B (351 aa).

At alanine 2 the chain carries N-acetylalanine. Serine 9 is modified (phosphoserine).

The protein belongs to the FAM118 family.

Its subcellular location is the nucleus. The protein resides in the cajal body. May play a role in Cajal bodies formation. This is Protein FAM118B (FAM118B) from Bos taurus (Bovine).